Reading from the N-terminus, the 571-residue chain is Proline--tRNA ligase (571 aa).

This sequence belongs to the class-II aminoacyl-tRNA synthetase family. ProS type 1 subfamily. As to quaternary structure, homodimer.

It localises to the cytoplasm. It catalyses the reaction tRNA(Pro) + L-proline + ATP = L-prolyl-tRNA(Pro) + AMP + diphosphate. In terms of biological role, catalyzes the attachment of proline to tRNA(Pro) in a two-step reaction: proline is first activated by ATP to form Pro-AMP and then transferred to the acceptor end of tRNA(Pro). As ProRS can inadvertently accommodate and process non-cognate amino acids such as alanine and cysteine, to avoid such errors it has two additional distinct editing activities against alanine. One activity is designated as 'pretransfer' editing and involves the tRNA(Pro)-independent hydrolysis of activated Ala-AMP. The other activity is designated 'posttransfer' editing and involves deacylation of mischarged Ala-tRNA(Pro). The misacylated Cys-tRNA(Pro) is not edited by ProRS. This chain is Proline--tRNA ligase, found in Pseudomonas paraeruginosa (strain DSM 24068 / PA7) (Pseudomonas aeruginosa (strain PA7)).